The chain runs to 198 residues: Nucleoside triphosphate pyrophosphatase (198 aa).

Asp74 serves as the catalytic Proton acceptor.

Belongs to the Maf family. It depends on a divalent metal cation as a cofactor.

Its subcellular location is the cytoplasm. It catalyses the reaction a ribonucleoside 5'-triphosphate + H2O = a ribonucleoside 5'-phosphate + diphosphate + H(+). The catalysed reaction is a 2'-deoxyribonucleoside 5'-triphosphate + H2O = a 2'-deoxyribonucleoside 5'-phosphate + diphosphate + H(+). Its function is as follows. Nucleoside triphosphate pyrophosphatase. May have a dual role in cell division arrest and in preventing the incorporation of modified nucleotides into cellular nucleic acids. This Sphingopyxis alaskensis (strain DSM 13593 / LMG 18877 / RB2256) (Sphingomonas alaskensis) protein is Nucleoside triphosphate pyrophosphatase.